The primary structure comprises 578 residues: Polypeptide N-acetylgalactosaminyltransferase 4 (578 aa).

The Cytoplasmic segment spans residues 1–12; the sequence is MAVRWTWAGKSC. Residues 13 to 35 form a helical; Signal-anchor for type II membrane protein membrane-spanning segment; it reads LLLALLTLAYILVEFSVSTLYAS. The Lumenal portion of the chain corresponds to 36 to 578; it reads PGAGGARELG…DKNQLWRFEK (543 aa). Cystine bridges form between cysteine 124-cysteine 357, cysteine 348-cysteine 421, cysteine 457-cysteine 477, cysteine 503-cysteine 518, and cysteine 547-cysteine 565. Residues 134–243 are catalytic subdomain A; sequence LPTTSVIIAF…TGWLEPLLER (110 aa). Residues aspartate 175 and arginine 204 each contribute to the substrate site. The Mn(2+) site is built by aspartate 227 and histidine 229. The tract at residues 303–365 is catalytic subdomain B; that stretch reads PIRSPTMAGG…PCSHVGHVFP (63 aa). Residue tryptophan 334 coordinates substrate. A Mn(2+)-binding site is contributed by histidine 362. Tyrosine 370 contributes to the substrate binding site. The Ricin B-type lectin domain occupies 444–577; that stretch reads WHGAIRSMGI…LDKNQLWRFE (134 aa). Residue asparagine 471 is glycosylated (N-linked (GlcNAc...) asparagine).

This sequence belongs to the glycosyltransferase 2 family. GalNAc-T subfamily. It depends on Mn(2+) as a cofactor. In terms of tissue distribution, highly expressed in sublingual gland, stomach, colon, small intestine and cervix. Expressed at intermediate levels in kidney, ovary, lung and uterus. Weakly expressed in spleen, liver, heart and brain. Not expressed in submandibular and parotid glands, skeletal muscle and testis.

Its subcellular location is the golgi apparatus membrane. It catalyses the reaction L-seryl-[protein] + UDP-N-acetyl-alpha-D-galactosamine = a 3-O-[N-acetyl-alpha-D-galactosaminyl]-L-seryl-[protein] + UDP + H(+). The catalysed reaction is L-threonyl-[protein] + UDP-N-acetyl-alpha-D-galactosamine = a 3-O-[N-acetyl-alpha-D-galactosaminyl]-L-threonyl-[protein] + UDP + H(+). Its pathway is protein modification; protein glycosylation. In terms of biological role, catalyzes the initial reaction in O-linked oligosaccharide biosynthesis, the transfer of an N-acetyl-D-galactosamine residue to a serine or threonine residue on the protein receptor. Has a highest activity toward EA2 peptide substrate and a much lower activity with EPO-T, Muc2, Muc1a, Muc1b. In Mus musculus (Mouse), this protein is Polypeptide N-acetylgalactosaminyltransferase 4 (Galnt4).